A 22-amino-acid polypeptide reads, in one-letter code: Brevinin-2LTa (22 aa).

In terms of tissue distribution, expressed by the skin glands.

It is found in the secreted. Functionally, has antibacterial activity. In Rana latastei (Italian agile frog), this protein is Brevinin-2LTa.